Reading from the N-terminus, the 91-residue chain is Gas vesicle protein K (91 aa).

Belongs to the gas vesicle GvpK family.

Its subcellular location is the gas vesicle. Might be involved in nucleating gas vesicle formation. Gas vesicles are hollow, gas filled proteinaceous nanostructures found in some microorganisms. It is not clear what function gas vesicles perform in soil bacteria. This chain is Gas vesicle protein K, found in Streptomyces sp. (strain CB03234).